The primary structure comprises 582 residues: DNA mismatch repair protein MutL (582 aa).

It belongs to the DNA mismatch repair MutL/HexB family.

In terms of biological role, this protein is involved in the repair of mismatches in DNA. It is required for dam-dependent methyl-directed DNA mismatch repair. May act as a 'molecular matchmaker', a protein that promotes the formation of a stable complex between two or more DNA-binding proteins in an ATP-dependent manner without itself being part of a final effector complex. The chain is DNA mismatch repair protein MutL from Acidiphilium cryptum (strain JF-5).